The following is a 266-amino-acid chain: Putative carbamate hydrolase RutD (266 aa).

It belongs to the AB hydrolase superfamily. Hydrolase RutD family.

The enzyme catalyses carbamate + 2 H(+) = NH4(+) + CO2. In terms of biological role, involved in pyrimidine catabolism. May facilitate the hydrolysis of carbamate, a reaction that can also occur spontaneously. In Escherichia coli O150:H5 (strain SE15), this protein is Putative carbamate hydrolase RutD.